The chain runs to 365 residues: UDP-N-acetylglucosamine--N-acetylmuramyl-(pentapeptide) pyrophosphoryl-undecaprenol N-acetylglucosamine transferase (365 aa).

UDP-N-acetyl-alpha-D-glucosamine contacts are provided by residues 11–13, N124, R165, S192, I246, and Q291; that span reads TGG.

It belongs to the glycosyltransferase 28 family. MurG subfamily.

It localises to the cell inner membrane. It carries out the reaction di-trans,octa-cis-undecaprenyl diphospho-N-acetyl-alpha-D-muramoyl-L-alanyl-D-glutamyl-meso-2,6-diaminopimeloyl-D-alanyl-D-alanine + UDP-N-acetyl-alpha-D-glucosamine = di-trans,octa-cis-undecaprenyl diphospho-[N-acetyl-alpha-D-glucosaminyl-(1-&gt;4)]-N-acetyl-alpha-D-muramoyl-L-alanyl-D-glutamyl-meso-2,6-diaminopimeloyl-D-alanyl-D-alanine + UDP + H(+). It participates in cell wall biogenesis; peptidoglycan biosynthesis. Its function is as follows. Cell wall formation. Catalyzes the transfer of a GlcNAc subunit on undecaprenyl-pyrophosphoryl-MurNAc-pentapeptide (lipid intermediate I) to form undecaprenyl-pyrophosphoryl-MurNAc-(pentapeptide)GlcNAc (lipid intermediate II). The polypeptide is UDP-N-acetylglucosamine--N-acetylmuramyl-(pentapeptide) pyrophosphoryl-undecaprenol N-acetylglucosamine transferase (Nitratidesulfovibrio vulgaris (strain ATCC 29579 / DSM 644 / CCUG 34227 / NCIMB 8303 / VKM B-1760 / Hildenborough) (Desulfovibrio vulgaris)).